The primary structure comprises 203 residues: Glycerol-3-phosphate acyltransferase (203 aa).

Transmembrane regions (helical) follow at residues 3–23 (ILLATVAAYLIGSVSFAVVVS), 51–71 (KAAILTLVGDAFKGWLAVWLV), 74–94 (FGIGGEIGVALAAIAVFLGHL), 116–136 (AVHPVLGLATALTWLIVAFFF), 140–160 (SLAALVAAVFAPIFDVFLFGT), and 164–178 (PVAWAVLAMSVLLIW).

Belongs to the PlsY family. In terms of assembly, probably interacts with PlsX.

It localises to the cell inner membrane. It carries out the reaction an acyl phosphate + sn-glycerol 3-phosphate = a 1-acyl-sn-glycero-3-phosphate + phosphate. Its pathway is lipid metabolism; phospholipid metabolism. Catalyzes the transfer of an acyl group from acyl-phosphate (acyl-PO(4)) to glycerol-3-phosphate (G3P) to form lysophosphatidic acid (LPA). This enzyme utilizes acyl-phosphate as fatty acyl donor, but not acyl-CoA or acyl-ACP. This chain is Glycerol-3-phosphate acyltransferase, found in Burkholderia pseudomallei (strain K96243).